Here is a 343-residue protein sequence, read N- to C-terminus: Endoglucanase C (343 aa).

The active-site Proton donor is the Glu-140. The active-site Nucleophile is the Glu-280.

Belongs to the glycosyl hydrolase 5 (cellulase A) family.

It catalyses the reaction Endohydrolysis of (1-&gt;4)-beta-D-glucosidic linkages in cellulose, lichenin and cereal beta-D-glucans.. Its pathway is glycan metabolism; cellulose degradation. In terms of biological role, this enzyme catalyzes the endohydrolysis of 1,4-beta-glucosidic linkages in cellulose, lichenin and cereal beta-D-glucans. In Acetivibrio thermocellus (Hungateiclostridium thermocellum), this protein is Endoglucanase C (celC).